A 1576-amino-acid chain; its full sequence is DNA-directed RNA polymerase subunit beta' (1576 aa).

Residues Cys64, Cys66, Cys79, and Cys82 each contribute to the Zn(2+) site. Positions 590, 592, and 594 each coordinate Mg(2+). 4 residues coordinate Zn(2+): Cys928, Cys1002, Cys1009, and Cys1012.

It belongs to the RNA polymerase beta' chain family. The RNAP catalytic core consists of 2 alpha, 1 beta, 1 beta' and 1 omega subunit. When a sigma factor is associated with the core the holoenzyme is formed, which can initiate transcription. The cofactor is Mg(2+). Zn(2+) serves as cofactor.

The enzyme catalyses RNA(n) + a ribonucleoside 5'-triphosphate = RNA(n+1) + diphosphate. Its function is as follows. DNA-dependent RNA polymerase catalyzes the transcription of DNA into RNA using the four ribonucleoside triphosphates as substrates. This chain is DNA-directed RNA polymerase subunit beta', found in Aquifex pyrophilus.